The primary structure comprises 284 residues: Nucleotide-binding protein PP_0949 (284 aa).

8 to 15 provides a ligand contact to ATP; that stretch reads GRSGSGKS. GTP is bound at residue 60–63; it reads DARN.

It belongs to the RapZ-like family.

In terms of biological role, displays ATPase and GTPase activities. The polypeptide is Nucleotide-binding protein PP_0949 (Pseudomonas putida (strain ATCC 47054 / DSM 6125 / CFBP 8728 / NCIMB 11950 / KT2440)).